The primary structure comprises 469 residues: Ribulose bisphosphate carboxylase large chain (469 aa).

Positions 1–2 (MS) are excised as a propeptide. Position 3 is an N-acetylproline (Pro-3). Lys-14 is modified (N6,N6,N6-trimethyllysine). Residues Asn-123 and Thr-173 each contribute to the substrate site. Lys-175 functions as the Proton acceptor in the catalytic mechanism. Lys-177 contributes to the substrate binding site. Mg(2+) is bound by residues Lys-201, Asp-203, and Glu-204. Lys-201 bears the N6-carboxylysine mark. The active-site Proton acceptor is the His-294. Residues Arg-295, His-327, and Ser-379 each contribute to the substrate site.

The protein belongs to the RuBisCO large chain family. Type I subfamily. As to quaternary structure, heterohexadecamer of 8 large chains and 8 small chains; disulfide-linked. The disulfide link is formed within the large subunit homodimers. It depends on Mg(2+) as a cofactor. Post-translationally, the disulfide bond which can form in the large chain dimeric partners within the hexadecamer appears to be associated with oxidative stress and protein turnover.

It is found in the plastid. The protein localises to the chloroplast. The enzyme catalyses 2 (2R)-3-phosphoglycerate + 2 H(+) = D-ribulose 1,5-bisphosphate + CO2 + H2O. It catalyses the reaction D-ribulose 1,5-bisphosphate + O2 = 2-phosphoglycolate + (2R)-3-phosphoglycerate + 2 H(+). Its function is as follows. RuBisCO catalyzes two reactions: the carboxylation of D-ribulose 1,5-bisphosphate, the primary event in carbon dioxide fixation, as well as the oxidative fragmentation of the pentose substrate in the photorespiration process. Both reactions occur simultaneously and in competition at the same active site. The chain is Ribulose bisphosphate carboxylase large chain from Iris ensata (Japanese iris).